The sequence spans 361 residues: Phosphoserine aminotransferase (361 aa).

An L-glutamate-binding site is contributed by arginine 42. Pyridoxal 5'-phosphate is bound by residues 76–77 (AR), tryptophan 102, threonine 153, aspartate 173, and glutamine 196. Lysine 197 bears the N6-(pyridoxal phosphate)lysine mark. 238–239 (NT) serves as a coordination point for pyridoxal 5'-phosphate.

It belongs to the class-V pyridoxal-phosphate-dependent aminotransferase family. SerC subfamily. In terms of assembly, homodimer. The cofactor is pyridoxal 5'-phosphate.

It is found in the cytoplasm. The catalysed reaction is O-phospho-L-serine + 2-oxoglutarate = 3-phosphooxypyruvate + L-glutamate. The enzyme catalyses 4-(phosphooxy)-L-threonine + 2-oxoglutarate = (R)-3-hydroxy-2-oxo-4-phosphooxybutanoate + L-glutamate. Its pathway is amino-acid biosynthesis; L-serine biosynthesis; L-serine from 3-phospho-D-glycerate: step 2/3. The protein operates within cofactor biosynthesis; pyridoxine 5'-phosphate biosynthesis; pyridoxine 5'-phosphate from D-erythrose 4-phosphate: step 3/5. Functionally, catalyzes the reversible conversion of 3-phosphohydroxypyruvate to phosphoserine and of 3-hydroxy-2-oxo-4-phosphonooxybutanoate to phosphohydroxythreonine. This is Phosphoserine aminotransferase from Pectobacterium carotovorum subsp. carotovorum (strain PC1).